The sequence spans 426 residues: Serine--tRNA ligase (426 aa).

Thr233–Glu235 contributes to the L-serine binding site. Arg264–Glu266 is a binding site for ATP. Glu287 is a binding site for L-serine. Residue Glu351–Ser354 participates in ATP binding. Ser386 contributes to the L-serine binding site.

The protein belongs to the class-II aminoacyl-tRNA synthetase family. Type-1 seryl-tRNA synthetase subfamily. Homodimer. The tRNA molecule binds across the dimer.

The protein localises to the cytoplasm. It carries out the reaction tRNA(Ser) + L-serine + ATP = L-seryl-tRNA(Ser) + AMP + diphosphate + H(+). The catalysed reaction is tRNA(Sec) + L-serine + ATP = L-seryl-tRNA(Sec) + AMP + diphosphate + H(+). Its pathway is aminoacyl-tRNA biosynthesis; selenocysteinyl-tRNA(Sec) biosynthesis; L-seryl-tRNA(Sec) from L-serine and tRNA(Sec): step 1/1. Functionally, catalyzes the attachment of serine to tRNA(Ser). Is also able to aminoacylate tRNA(Sec) with serine, to form the misacylated tRNA L-seryl-tRNA(Sec), which will be further converted into selenocysteinyl-tRNA(Sec). The polypeptide is Serine--tRNA ligase (Prochlorococcus marinus (strain NATL1A)).